The following is a 308-amino-acid chain: Aspartate carbamoyltransferase catalytic subunit (308 aa).

Residues Arg-59 and Thr-60 each coordinate carbamoyl phosphate. Lys-87 is an L-aspartate binding site. Positions 109, 139, and 142 each coordinate carbamoyl phosphate. Residues Arg-172 and Arg-224 each contribute to the L-aspartate site. Carbamoyl phosphate contacts are provided by Ala-265 and Pro-266.

The protein belongs to the aspartate/ornithine carbamoyltransferase superfamily. ATCase family. In terms of assembly, heterododecamer (2C3:3R2) of six catalytic PyrB chains organized as two trimers (C3), and six regulatory PyrI chains organized as three dimers (R2).

The catalysed reaction is carbamoyl phosphate + L-aspartate = N-carbamoyl-L-aspartate + phosphate + H(+). It functions in the pathway pyrimidine metabolism; UMP biosynthesis via de novo pathway; (S)-dihydroorotate from bicarbonate: step 2/3. In terms of biological role, catalyzes the condensation of carbamoyl phosphate and aspartate to form carbamoyl aspartate and inorganic phosphate, the committed step in the de novo pyrimidine nucleotide biosynthesis pathway. This is Aspartate carbamoyltransferase catalytic subunit from Enterococcus faecalis (strain ATCC 700802 / V583).